The primary structure comprises 353 residues: D-alanine--D-alanine ligase (353 aa).

Residues 141–349 (KAAFAAAGLS…LPQLVAELVD (209 aa)) enclose the ATP-grasp domain. 176–231 (EQELGYPCFVKPANLGSSVGITKANNRDELLAGLHQAAALDPRLLVEQGVNARELE) lines the ATP pocket. The Mg(2+) site is built by D302, E316, and N318.

This sequence belongs to the D-alanine--D-alanine ligase family. The cofactor is Mg(2+). Mn(2+) is required as a cofactor.

Its subcellular location is the cytoplasm. It catalyses the reaction 2 D-alanine + ATP = D-alanyl-D-alanine + ADP + phosphate + H(+). It functions in the pathway cell wall biogenesis; peptidoglycan biosynthesis. Functionally, cell wall formation. This chain is D-alanine--D-alanine ligase, found in Synechococcus sp. (strain WH7803).